Here is a 211-residue protein sequence, read N- to C-terminus: Nucleoside diphosphate kinase homolog 5 (211 aa).

The segment at 13–145 is NDK; the sequence is EKTLALIKPD…EREIRFMFPA (133 aa).

This sequence belongs to the NDK family. In terms of assembly, component of the axonemal radial spoke complex 1 (RS1), at least composed of spoke head proteins RSPH1, RSPH3, RSPH9 and the cilia-specific component RSPH4A or sperm-specific component RSPH6A, spoke stalk proteins RSPH14, DNAJB13, DYDC1, ROPN1L and NME5, and the anchor protein IQUB. Interacts with IQUB. Expressed in the trachea, ependymal cells and oviduct (at protein level). Expressed predominantly in germ cells of the testis. Not expressed in testicular somatic cells.

The protein localises to the cell projection. The protein resides in the cilium. Its subcellular location is the cytoplasm. It localises to the cytoskeleton. It is found in the flagellum axoneme. Functions as part of axonemal radial spoke complexes that play an important part in the motility of sperm and cilia. Does not seem to have nucleoside diphosphate kinase (NDPK) activity. Confers protection from cell death by BAX and alters the cellular levels of several antioxidant enzymes including GPX5. May play a role in spermiogenesis by increasing the ability of late-stage spermatids to eliminate reactive oxygen species. The chain is Nucleoside diphosphate kinase homolog 5 (Nme5) from Mus musculus (Mouse).